Consider the following 141-residue polypeptide: Large ribosomal subunit protein uL13 (141 aa).

This sequence belongs to the universal ribosomal protein uL13 family. Part of the 50S ribosomal subunit.

Functionally, this protein is one of the early assembly proteins of the 50S ribosomal subunit, although it is not seen to bind rRNA by itself. It is important during the early stages of 50S assembly. The sequence is that of Large ribosomal subunit protein uL13 from Helicobacter pylori (strain G27).